Reading from the N-terminus, the 320-residue chain is Ciliary microtubule inner protein 2A (320 aa).

The protein belongs to the CIMIP2 family. Microtubule inner protein component of sperm flagellar doublet microtubules. As to expression, expressed in sperm.

Its subcellular location is the cytoplasm. The protein resides in the cytoskeleton. It is found in the flagellum axoneme. In terms of biological role, microtubule inner protein (MIP) part of the dynein-decorated doublet microtubules (DMTs) in flagellum axoneme. Binds to the intra-tubulin interfaces. This chain is Ciliary microtubule inner protein 2A (CIMIP2A), found in Bos taurus (Bovine).